Consider the following 632-residue polypeptide: tRNA uridine 5-carboxymethylaminomethyl modification enzyme MnmG (632 aa).

FAD contacts are provided by residues Gly-15 to Gly-20, Val-127, and Ser-182. Residues Thr-203–Pro-226 are disordered. A compositionally biased stretch (basic and acidic residues) spans Ser-215 to Pro-226. Position 274–288 (Gly-274–Phe-288) interacts with NAD(+). FAD is bound at residue Gln-371.

Belongs to the MnmG family. In terms of assembly, homodimer. Heterotetramer of two MnmE and two MnmG subunits. Requires FAD as cofactor.

Its subcellular location is the cytoplasm. In terms of biological role, NAD-binding protein involved in the addition of a carboxymethylaminomethyl (cmnm) group at the wobble position (U34) of certain tRNAs, forming tRNA-cmnm(5)s(2)U34. This Listeria monocytogenes serotype 4b (strain F2365) protein is tRNA uridine 5-carboxymethylaminomethyl modification enzyme MnmG.